Reading from the N-terminus, the 133-residue chain is Profilin-3 (133 aa).

The protein belongs to the profilin family. In terms of assembly, occurs in many kinds of cells as a complex with monomeric actin in a 1:1 ratio.

It is found in the cytoplasm. Its subcellular location is the cytoskeleton. Binds to actin and affects the structure of the cytoskeleton. At high concentrations, profilin prevents the polymerization of actin, whereas it enhances it at low concentrations. By binding to PIP2, it inhibits the formation of IP3 and DG. The protein is Profilin-3 (PRO3) of Nicotiana tabacum (Common tobacco).